We begin with the raw amino-acid sequence, 20 residues long: Collagenolytic protease 36 kDa A (20 aa).

One can recognise a Peptidase S1 domain in the interval 1-20 (IVGGTEVTPGEIPYQLSLQD). The segment at 1-20 (IVGGTEVTPGEIPYQLSLQD) is disordered.

The protein belongs to the peptidase S1 family.

It catalyses the reaction Hydrolysis of proteins, with broad specificity for peptide bonds. Native collagen is cleaved about 75% of the length of the molecule from the N-terminus. Low activity on small molecule substrates of both trypsin and chymotrypsin.. This enzyme is a serine protease capable of degrading the native triple helix of collagen. This chain is Collagenolytic protease 36 kDa A, found in Paralithodes camtschaticus (Red king crab).